Here is a 142-residue protein sequence, read N- to C-terminus: Peptide methionine sulfoxide reductase MsrB (142 aa).

The MsrB domain maps to I2–Y125. The active-site Nucleophile is C114.

Belongs to the MsrB Met sulfoxide reductase family.

It catalyses the reaction L-methionyl-[protein] + [thioredoxin]-disulfide + H2O = L-methionyl-(R)-S-oxide-[protein] + [thioredoxin]-dithiol. This is Peptide methionine sulfoxide reductase MsrB from Staphylococcus epidermidis (strain ATCC 35984 / DSM 28319 / BCRC 17069 / CCUG 31568 / BM 3577 / RP62A).